A 780-amino-acid polypeptide reads, in one-letter code: 5-methyltetrahydropteroyltriglutamate--homocysteine methyltransferase (780 aa).

Residues 15–18 (RELK) and Lys-114 contribute to the 5-methyltetrahydropteroyltri-L-glutamate site. L-homocysteine contacts are provided by residues 457–459 (IGS) and Glu-510. L-methionine contacts are provided by residues 457–459 (IGS) and Glu-510. Residues 541–542 (RC) and Trp-587 each bind 5-methyltetrahydropteroyltri-L-glutamate. Asp-625 lines the L-homocysteine pocket. Position 625 (Asp-625) interacts with L-methionine. 5-methyltetrahydropteroyltri-L-glutamate is bound at residue Glu-631. 3 residues coordinate Zn(2+): His-667, Cys-669, and Glu-691. His-720 serves as the catalytic Proton donor. Cys-752 serves as a coordination point for Zn(2+).

The protein belongs to the vitamin-B12 independent methionine synthase family. Zn(2+) is required as a cofactor.

The enzyme catalyses 5-methyltetrahydropteroyltri-L-glutamate + L-homocysteine = tetrahydropteroyltri-L-glutamate + L-methionine. It functions in the pathway amino-acid biosynthesis; L-methionine biosynthesis via de novo pathway; L-methionine from L-homocysteine (MetE route): step 1/1. In terms of biological role, catalyzes the transfer of a methyl group from 5-methyltetrahydrofolate to homocysteine resulting in methionine formation. This chain is 5-methyltetrahydropteroyltriglutamate--homocysteine methyltransferase, found in Nitratidesulfovibrio vulgaris (strain DSM 19637 / Miyazaki F) (Desulfovibrio vulgaris).